The chain runs to 608 residues: ABC transporter ATP-binding protein RamB (608 aa).

The next 5 helical transmembrane spans lie at 25 to 45 (GVLV…FLVG), 66 to 86 (LWLG…RGVF), 141 to 161 (GLVL…LGLL), 166 to 186 (ALLV…LVTL), and 253 to 273 (AALG…VEWL). The 267-residue stretch at 30-296 (LALWSLAESG…FTYLVQSLLP (267 aa)) folds into the ABC transmembrane type-1 domain. The disordered stretch occupies residues 321 to 362 (GPEPEPEPEPEPEPEPELGSGLEPEPEPASEPESGPSTASAS). Acidic residues predominate over residues 324–336 (PEPEPEPEPEPEP). The segment covering 351 to 362 (EPESGPSTASAS) has biased composition (low complexity). The 230-residue stretch at 376 to 605 (VELRSVTLSY…SPLYRDLTGH (230 aa)) folds into the ABC transporter domain. Position 410–417 (410–417 (GPSGIGKS)) interacts with ATP.

Belongs to the ABC transporter superfamily.

It localises to the cell membrane. Functionally, probably involved in exporting SapB from the cell. Expression of the ram locus (ramA, ramB and ramR) induces rapid aerial mycelium formation in S.lividans. The polypeptide is ABC transporter ATP-binding protein RamB (Streptomyces coelicolor (strain ATCC BAA-471 / A3(2) / M145)).